Consider the following 177-residue polypeptide: Bifunctional protein PyrR (177 aa).

Positions 101–113 (IILIDDVLYTGRT) match the PRPP-binding motif.

This sequence belongs to the purine/pyrimidine phosphoribosyltransferase family. PyrR subfamily.

The enzyme catalyses UMP + diphosphate = 5-phospho-alpha-D-ribose 1-diphosphate + uracil. Its function is as follows. Regulates the transcription of the pyrimidine nucleotide (pyr) operon in response to exogenous pyrimidines. Also displays a weak uracil phosphoribosyltransferase activity which is not physiologically significant. This Endomicrobium trichonymphae protein is Bifunctional protein PyrR.